Consider the following 141-residue polypeptide: Nucleoside diphosphate kinase (141 aa).

6 residues coordinate ATP: lysine 11, phenylalanine 59, arginine 87, threonine 93, arginine 104, and asparagine 114. Histidine 117 (pros-phosphohistidine intermediate) is an active-site residue.

This sequence belongs to the NDK family. Homotetramer. Requires Mg(2+) as cofactor.

The protein localises to the cytoplasm. It carries out the reaction a 2'-deoxyribonucleoside 5'-diphosphate + ATP = a 2'-deoxyribonucleoside 5'-triphosphate + ADP. The enzyme catalyses a ribonucleoside 5'-diphosphate + ATP = a ribonucleoside 5'-triphosphate + ADP. Functionally, major role in the synthesis of nucleoside triphosphates other than ATP. The ATP gamma phosphate is transferred to the NDP beta phosphate via a ping-pong mechanism, using a phosphorylated active-site intermediate. The polypeptide is Nucleoside diphosphate kinase (Methylibium petroleiphilum (strain ATCC BAA-1232 / LMG 22953 / PM1)).